We begin with the raw amino-acid sequence, 813 residues long: ATP-dependent zinc metalloprotease FTSH 10, mitochondrial (813 aa).

The transit peptide at 1-86 (MIFSKLGSSL…FANPRLRRFF (86 aa)) directs the protein to the mitochondrion. Residues 93-129 (KKNYENYYPKDSKKAPKNEQKSESRDGSKKNENENAG) form a disordered region. Residues 94–125 (KNYENYYPKDSKKAPKNEQKSESRDGSKKNEN) are compositionally biased toward basic and acidic residues. A helical membrane pass occupies residues 139–157 (MLIPLMAIALILSTFSLGS). 367–374 (GPPGTGKT) provides a ligand contact to ATP. Position 592 (H592) interacts with Zn(2+). Residue E593 is part of the active site. Positions 596 and 668 each coordinate Zn(2+). Residues 764–790 (RPFKSGETTNYDRFKSGFEESEKESQK) show a composition bias toward basic and acidic residues. Residues 764 to 813 (RPFKSGETTNYDRFKSGFEESEKESQKESVPVKPVEDDGIPPLEPQVVPT) are disordered.

The protein in the N-terminal section; belongs to the AAA ATPase family. It in the C-terminal section; belongs to the peptidase M41 family. Zn(2+) is required as a cofactor.

It is found in the mitochondrion inner membrane. Probable ATP-dependent zinc metallopeptidase. Involved in the assembly and/or stability of the complexes I and V of the mitochondrial oxidative phosphorylation system. This chain is ATP-dependent zinc metalloprotease FTSH 10, mitochondrial (FTSH10), found in Arabidopsis thaliana (Mouse-ear cress).